The sequence spans 171 residues: Glycine cleavage system H protein 4 (171 aa).

Residues 30–112 (FAEVGITDYA…YEAGWIAVIE (83 aa)) enclose the Lipoyl-binding domain. The residue at position 71 (Lys-71) is an N6-lipoyllysine. Residues 139–171 (EKEEEVEVKEEELIETESIEELSEEELGYEENK) are disordered.

Belongs to the GcvH family. As to quaternary structure, the glycine cleavage system is composed of four proteins: P, T, L and H. It depends on (R)-lipoate as a cofactor.

Functionally, the glycine cleavage system catalyzes the degradation of glycine. The H protein shuttles the methylamine group of glycine from the P protein to the T protein. In Aquifex aeolicus (strain VF5), this protein is Glycine cleavage system H protein 4.